A 411-amino-acid chain; its full sequence is Dual-specificity RNA methyltransferase RlmN (411 aa).

Glu125 (proton acceptor) is an active-site residue. The Radical SAM core domain occupies 131–380 (EEGRGTLCVS…IRTPRGRDIL (250 aa)). A disulfide bond links Cys138 and Cys383. Positions 145, 149, and 152 each coordinate [4Fe-4S] cluster. Residues 209–210 (GE), Ser241, 263–265 (SLH), and Asn340 contribute to the S-adenosyl-L-methionine site. Cys383 functions as the S-methylcysteine intermediate in the catalytic mechanism.

Belongs to the radical SAM superfamily. RlmN family. It depends on [4Fe-4S] cluster as a cofactor.

The protein localises to the cytoplasm. The catalysed reaction is adenosine(2503) in 23S rRNA + 2 reduced [2Fe-2S]-[ferredoxin] + 2 S-adenosyl-L-methionine = 2-methyladenosine(2503) in 23S rRNA + 5'-deoxyadenosine + L-methionine + 2 oxidized [2Fe-2S]-[ferredoxin] + S-adenosyl-L-homocysteine. It carries out the reaction adenosine(37) in tRNA + 2 reduced [2Fe-2S]-[ferredoxin] + 2 S-adenosyl-L-methionine = 2-methyladenosine(37) in tRNA + 5'-deoxyadenosine + L-methionine + 2 oxidized [2Fe-2S]-[ferredoxin] + S-adenosyl-L-homocysteine. Functionally, specifically methylates position 2 of adenine 2503 in 23S rRNA and position 2 of adenine 37 in tRNAs. m2A2503 modification seems to play a crucial role in the proofreading step occurring at the peptidyl transferase center and thus would serve to optimize ribosomal fidelity. The protein is Dual-specificity RNA methyltransferase RlmN of Brucella anthropi (strain ATCC 49188 / DSM 6882 / CCUG 24695 / JCM 21032 / LMG 3331 / NBRC 15819 / NCTC 12168 / Alc 37) (Ochrobactrum anthropi).